The following is a 374-amino-acid chain: tRNA-specific 2-thiouridylase MnmA (374 aa).

ATP is bound by residues 12–19 and M38; that span reads GMSGGVDS. Residues 98-100 are interaction with target base in tRNA; that stretch reads NPD. The Nucleophile role is filled by C103. A disulfide bridge links C103 with C200. Residue G127 coordinates ATP. Positions 150–152 are interaction with tRNA; the sequence is KDQ. The Cysteine persulfide intermediate role is filled by C200. The interval 311-312 is interaction with tRNA; it reads RY.

The protein belongs to the MnmA/TRMU family.

The protein resides in the cytoplasm. It carries out the reaction S-sulfanyl-L-cysteinyl-[protein] + uridine(34) in tRNA + AH2 + ATP = 2-thiouridine(34) in tRNA + L-cysteinyl-[protein] + A + AMP + diphosphate + H(+). Its function is as follows. Catalyzes the 2-thiolation of uridine at the wobble position (U34) of tRNA, leading to the formation of s(2)U34. The sequence is that of tRNA-specific 2-thiouridylase MnmA from Lactiplantibacillus plantarum (strain ATCC BAA-793 / NCIMB 8826 / WCFS1) (Lactobacillus plantarum).